The primary structure comprises 434 residues: Putative nuclease OPG089 (434 aa).

Positions 33, 74, 168, 170, 196, and 198 each coordinate Mg(2+).

This sequence belongs to the XPG/RAD2 endonuclease family. FEN1 subfamily. Mg(2+) serves as cofactor.

The protein resides in the virion. In terms of biological role, putative nuclease that seems to be required for double-strand break repair, homologous recombination, and production of full-length viral genomic DNA. The polypeptide is Putative nuclease OPG089 (OPG089) (Homo sapiens (Human)).